A 291-amino-acid polypeptide reads, in one-letter code: Pituitary-specific positive transcription factor 1 (291 aa).

The 9aaTAD motif lies at 5-13 (PFTSTDTFI). The 75-residue stretch at 124–198 (MDSPEIRELE…ILSKWLEEAE (75 aa)) folds into the POU-specific domain. Positions 214-273 (KRKRRTTISIAAKDALERHFGEQNKPSSQEILRMAEELNLEKEVVRVWFCNRRQREKRVK) form a DNA-binding region, homeobox.

It belongs to the POU transcription factor family. Class-1 subfamily. As to quaternary structure, interacts with PITX1. Interacts with LHX3. Interacts with ELK1.

The protein localises to the nucleus. In terms of biological role, transcription factor involved in the specification of the lactotrope, somatotrope, and thyrotrope phenotypes in the developing anterior pituitary. Activates growth hormone and prolactin genes. Specifically binds to the consensus sequence 5'-TAAAT-3'. This is Pituitary-specific positive transcription factor 1 (POU1F1) from Bos taurus (Bovine).